A 600-amino-acid polypeptide reads, in one-letter code: Calcium/calmodulin-dependent serine/threonine-protein kinase 1 (600 aa).

The disordered stretch occupies residues methionine 1–proline 99. Low complexity predominate over residues threonine 24–proline 56. The segment covering tyrosine 74–serine 85 has biased composition (polar residues). The 263-residue stretch at tyrosine 147 to isoleucine 409 folds into the Protein kinase domain. Residues valine 153–threonine 161 and lysine 179 each bind ATP. Residue aspartate 275 is the Proton acceptor of the active site.

The protein belongs to the protein kinase superfamily. Ser/Thr protein kinase family. Autophosphorylated. In terms of tissue distribution, highly expressed in roots in the zone of cell division. Expressed in leaf mesophyll cells and at lower levels in mature stems.

The catalysed reaction is L-seryl-[protein] + ATP = O-phospho-L-seryl-[protein] + ADP + H(+). The enzyme catalyses L-threonyl-[protein] + ATP = O-phospho-L-threonyl-[protein] + ADP + H(+). Activated by the binding of calmodulin-like protein 1 (CML1) in the presence of Ca(2+). Functionally, possesses kinase activity in vitro. The protein is Calcium/calmodulin-dependent serine/threonine-protein kinase 1 (CAMK1) of Oryza sativa subsp. japonica (Rice).